An 875-amino-acid polypeptide reads, in one-letter code: Alanine--tRNA ligase (875 aa).

H564, H568, C666, and H670 together coordinate Zn(2+).

It belongs to the class-II aminoacyl-tRNA synthetase family. Homotetramer. The cofactor is Zn(2+).

It is found in the cytoplasm. The enzyme catalyses tRNA(Ala) + L-alanine + ATP = L-alanyl-tRNA(Ala) + AMP + diphosphate. Catalyzes the attachment of alanine to tRNA(Ala) in a two-step reaction: alanine is first activated by ATP to form Ala-AMP and then transferred to the acceptor end of tRNA(Ala). Also edits incorrectly charged Ser-tRNA(Ala) and Gly-tRNA(Ala) via its editing domain. The polypeptide is Alanine--tRNA ligase (Yersinia pseudotuberculosis serotype IB (strain PB1/+)).